The sequence spans 294 residues: MEQYEKVEKIGEGTYGVVYKARDRVTNETIALKKIRLEQEDEGVPSTAIREISLLKEMQHGNIVRLQDVVHSEKRLYLVFEYLDLDLKKHMDSCPEFSQDPRLVKMFLYQILRGIAYCHSHRVLHRDLKPQNLLIDRRTNALKLADFGLARAFGIPVRTFTHEVVTLWYRAPEILLGSRHYSTPVDVWSVGCIFAEMVNQRPLFPGDSEIDELFKIFRVMGTPNEETWPGVTSLPDFKSAFPKWPAKELAAVVPNLDASGLDLLDKMLRLDPSKRITARNALQHEYFKDIGFVP.

The Protein kinase domain occupies 4–287 (YEKVEKIGEG…ARNALQHEYF (284 aa)). ATP-binding positions include 10 to 18 (IGEGTYGVV) and Lys33. Thr14 is modified (phosphothreonine). A Phosphotyrosine modification is found at Tyr15. Asp127 functions as the Proton acceptor in the catalytic mechanism. Position 161 is a phosphothreonine; by CAK (Thr161).

This sequence belongs to the protein kinase superfamily. CMGC Ser/Thr protein kinase family. CDC2/CDKX subfamily.

The catalysed reaction is L-seryl-[protein] + ATP = O-phospho-L-seryl-[protein] + ADP + H(+). It catalyses the reaction L-threonyl-[protein] + ATP = O-phospho-L-threonyl-[protein] + ADP + H(+). It carries out the reaction [DNA-directed RNA polymerase] + ATP = phospho-[DNA-directed RNA polymerase] + ADP + H(+). Phosphorylation at Thr-14 or Tyr-15 inactivates the enzyme, while phosphorylation at Thr-161 activates it. Functionally, plays a key role in the control of the eukaryotic cell cycle. In Antirrhinum majus (Garden snapdragon), this protein is Cell division control protein 2 homolog A (CDC2A).